The primary structure comprises 68 residues: Copper transport protein ATOX1 (68 aa).

Residues 1-63 (MPKHEFSVDM…TLNKTGKAVS (63 aa)) form the HMA domain. Cu cation is bound by residues Cys-12 and Cys-15. Ser-47 bears the Phosphoserine mark. The residue at position 60 (Lys-60) is an N6-acetyllysine.

Belongs to the ATX1 family. In terms of assembly, homodimer. Interacts with ATP7B. Interacts with ATP7A. Interacts (via dimer form) with SLC31A1 (via C-terminal domain); this interaction improves ATOX1 stability and controls intracellular Cu(I) levels.

Its function is as follows. Binds and deliver cytosolic copper to the copper ATPase proteins. May be important in cellular antioxidant defense. In Rattus norvegicus (Rat), this protein is Copper transport protein ATOX1.